A 69-amino-acid polypeptide reads, in one-letter code: Mitotic-spindle organizing protein 1 (69 aa).

It belongs to the MOZART1 family. Part of the gamma-tubulin complex.

The protein resides in the cytoplasm. It is found in the cytoskeleton. The protein localises to the microtubule organizing center. It localises to the spindle. Required for gamma-tubulin complex recruitment to the microtubule organizing centers (MTOCs). This Picea sitchensis (Sitka spruce) protein is Mitotic-spindle organizing protein 1.